The following is a 584-amino-acid chain: Aspartate--tRNA(Asp/Asn) ligase (584 aa).

Position 177 (E177) interacts with L-aspartate. Residues 201–204 (QLFK) are aspartate. An L-aspartate-binding site is contributed by R223. Residues 223–225 (RDE) and Q232 contribute to the ATP site. H447 provides a ligand contact to L-aspartate. E481 serves as a coordination point for ATP. R488 lines the L-aspartate pocket. An ATP-binding site is contributed by 533-536 (GLDR).

Belongs to the class-II aminoacyl-tRNA synthetase family. Type 1 subfamily. Homodimer.

Its subcellular location is the cytoplasm. The enzyme catalyses tRNA(Asx) + L-aspartate + ATP = L-aspartyl-tRNA(Asx) + AMP + diphosphate. Its function is as follows. Aspartyl-tRNA synthetase with relaxed tRNA specificity since it is able to aspartylate not only its cognate tRNA(Asp) but also tRNA(Asn). Reaction proceeds in two steps: L-aspartate is first activated by ATP to form Asp-AMP and then transferred to the acceptor end of tRNA(Asp/Asn). This Chlamydia abortus (strain DSM 27085 / S26/3) (Chlamydophila abortus) protein is Aspartate--tRNA(Asp/Asn) ligase.